Consider the following 448-residue polypeptide: Fibulin-5 (448 aa).

Positions 1-23 (MPGLKRILTVTILALWLPHPGNA) are cleaved as a signal peptide. An EGF-like 1; calcium-binding domain is found at 42–82 (DIDECRTIPEACRGDMMCVNQNGGYLCIPRTNPVYRGPYSN). Cystine bridges form between Cys46-Cys59, Cys53-Cys68, Cys131-Cys144, Cys138-Cys153, Cys155-Cys166, Cys172-Cys181, Cys177-Cys190, Cys192-Cys205, Cys211-Cys221, Cys217-Cys230, Cys232-Cys245, Cys251-Cys262, Cys258-Cys271, Cys273-Cys286, Cys292-Cys305, Cys299-Cys314, and Cys320-Cys332. The short motif at 54–56 (RGD) is the Cell attachment site element. One can recognise an EGF-like 2; calcium-binding domain in the interval 127-167 (DVDECATDSHQCNPTQICINTEGGYTCSCTDGYWLLEGQCL). The EGF-like 3; calcium-binding domain maps to 168-206 (DIDECRYGYCQQLCANVPGSYSCTCNPGFTLNDDGRSCQ). Residues 207–246 (DVNECETENPCVQTCVNTYGSFICRCDPGYELEEDGIHCS) form the EGF-like 4; calcium-binding domain. The tract at residues 245–448 (CSDMDECSFS…LRIYVSQYPF (204 aa)) is interaction with LOXL1. Residues 247–287 (DMDECSFSEFLCQHECVNQPGSYFCSCPPGYVLLDDNRSCQ) enclose the EGF-like 5; calcium-binding domain. N-linked (GlcNAc...) asparagine glycans are attached at residues Asn283 and Asn296. The EGF-like 6; calcium-binding domain occupies 288-333 (DINECEHRNHTCTSLQTCYNLQGGFKCIDPISCEEPYLLIGENRCM).

It belongs to the fibulin family. In terms of assembly, homodimer. Monomer, homodimerizes in presence of Ca(2+). Interacts with ELN. Interacts (via N-terminus) with the integrins ITGAV/ITGB3, ITGAV/ITGB5 and ITGA9/ITGB1. Interacts with FBN1 (via N-terminal domain). Forms a ternary complex with ELN and FBN1. Interacts with EFEMP2 with moderate affinity. Interacts with LOXL1. In terms of processing, N-glycosylated.

Its subcellular location is the secreted. The protein resides in the extracellular space. The protein localises to the extracellular matrix. Its function is as follows. Essential for elastic fiber formation, is involved in the assembly of continuous elastin (ELN) polymer and promotes the interaction of microfibrils and ELN. Stabilizes and organizes elastic fibers in the skin, lung and vasculature. Promotes adhesion of endothelial cells through interaction of integrins and the RGD motif. Vascular ligand for integrin receptors which may play a role in vascular development and remodeling. May act as an adapter that mediates the interaction between FBN1 and ELN. The sequence is that of Fibulin-5 (Fbln5) from Mus musculus (Mouse).